The chain runs to 419 residues: UDP-N-acetylglucosamine 1-carboxyvinyltransferase (419 aa).

22–23 (KN) serves as a coordination point for phosphoenolpyruvate. Arg-91 is a binding site for UDP-N-acetyl-alpha-D-glucosamine. The active-site Proton donor is Cys-115. Position 115 is a 2-(S-cysteinyl)pyruvic acid O-phosphothioketal (Cys-115). UDP-N-acetyl-alpha-D-glucosamine-binding positions include 120 to 124 (RPVDL), 160 to 163 (KVSV), Asp-305, and Val-327.

This sequence belongs to the EPSP synthase family. MurA subfamily.

The protein localises to the cytoplasm. It carries out the reaction phosphoenolpyruvate + UDP-N-acetyl-alpha-D-glucosamine = UDP-N-acetyl-3-O-(1-carboxyvinyl)-alpha-D-glucosamine + phosphate. It participates in cell wall biogenesis; peptidoglycan biosynthesis. Functionally, cell wall formation. Adds enolpyruvyl to UDP-N-acetylglucosamine. This is UDP-N-acetylglucosamine 1-carboxyvinyltransferase from Shigella sonnei (strain Ss046).